The primary structure comprises 155 residues: Protein-export protein SecB (155 aa).

It belongs to the SecB family. Homotetramer, a dimer of dimers. One homotetramer interacts with 1 SecA dimer.

Its subcellular location is the cytoplasm. One of the proteins required for the normal export of preproteins out of the cell cytoplasm. It is a molecular chaperone that binds to a subset of precursor proteins, maintaining them in a translocation-competent state. It also specifically binds to its receptor SecA. The protein is Protein-export protein SecB of Enterobacter sp. (strain 638).